We begin with the raw amino-acid sequence, 293 residues long: Ribosomal protein L11 methyltransferase (293 aa).

S-adenosyl-L-methionine-binding residues include Thr-145, Gly-166, Asp-188, and Asn-230.

The protein belongs to the methyltransferase superfamily. PrmA family.

It is found in the cytoplasm. It carries out the reaction L-lysyl-[protein] + 3 S-adenosyl-L-methionine = N(6),N(6),N(6)-trimethyl-L-lysyl-[protein] + 3 S-adenosyl-L-homocysteine + 3 H(+). Its function is as follows. Methylates ribosomal protein L11. The sequence is that of Ribosomal protein L11 methyltransferase from Sodalis glossinidius (strain morsitans).